The sequence spans 666 residues: Protein translocase subunit SecA 2 (666 aa).

ATP is bound by residues Q119, 137–141 (GEGKS), and D546.

The protein belongs to the SecA family. As to quaternary structure, monomer and homodimer. Part of the essential Sec protein translocation apparatus which comprises SecA, SecYEG and auxiliary proteins SecDF-YajC and YidC.

It is found in the cell inner membrane. It localises to the cytoplasm. It catalyses the reaction ATP + H2O + cellular proteinSide 1 = ADP + phosphate + cellular proteinSide 2.. Part of the Sec protein translocase complex. Interacts with the SecYEG preprotein conducting channel. Has a central role in coupling the hydrolysis of ATP to the transfer of proteins into and across the cell membrane, serving both as a receptor for the preprotein-SecB complex and as an ATP-driven molecular motor driving the stepwise translocation of polypeptide chains across the membrane. This Nitrosospira multiformis (strain ATCC 25196 / NCIMB 11849 / C 71) protein is Protein translocase subunit SecA 2.